A 144-amino-acid polypeptide reads, in one-letter code: Large ribosomal subunit protein uL15 (144 aa).

The disordered stretch occupies residues 24–52; sequence GSGLGKTAGRGHKGLKSRSGGSVRPGFEG.

This sequence belongs to the universal ribosomal protein uL15 family. In terms of assembly, part of the 50S ribosomal subunit.

In terms of biological role, binds to the 23S rRNA. The polypeptide is Large ribosomal subunit protein uL15 (Cellvibrio japonicus (strain Ueda107) (Pseudomonas fluorescens subsp. cellulosa)).